The primary structure comprises 753 residues: 5-methyltetrahydropteroyltriglutamate--homocysteine methyltransferase (753 aa).

5-methyltetrahydropteroyltri-L-glutamate-binding positions include 17–20 and K117; that span reads RELK. L-homocysteine contacts are provided by residues 431–433 and E484; that span reads IGS. L-methionine-binding positions include 431–433 and E484; that span reads IGS. Residues 515–516 and W561 contribute to the 5-methyltetrahydropteroyltri-L-glutamate site; that span reads RC. D599 contacts L-homocysteine. Residue D599 coordinates L-methionine. E605 lines the 5-methyltetrahydropteroyltri-L-glutamate pocket. Residues H641, C643, and E665 each coordinate Zn(2+). The Proton donor role is filled by H694. C726 is a binding site for Zn(2+).

Belongs to the vitamin-B12 independent methionine synthase family. It depends on Zn(2+) as a cofactor.

It catalyses the reaction 5-methyltetrahydropteroyltri-L-glutamate + L-homocysteine = tetrahydropteroyltri-L-glutamate + L-methionine. The protein operates within amino-acid biosynthesis; L-methionine biosynthesis via de novo pathway; L-methionine from L-homocysteine (MetE route): step 1/1. Catalyzes the transfer of a methyl group from 5-methyltetrahydrofolate to homocysteine resulting in methionine formation. The chain is 5-methyltetrahydropteroyltriglutamate--homocysteine methyltransferase from Shigella flexneri serotype 5b (strain 8401).